The sequence spans 103 residues: Cell division protein FtsB (103 aa).

The Cytoplasmic portion of the chain corresponds to 1–3 (MGK). Residues 4-21 (LTLLLLAILVWLQYSLWF) form a helical membrane-spanning segment. The Periplasmic segment spans residues 22–103 (GKNGIHDYTR…RAQSAGQNNR (82 aa)). Residues 31–71 (RVNNDVAAQQATNAKLKARNDQLFAEIDDLNGGQEALEERA) adopt a coiled-coil conformation.

The protein belongs to the FtsB family. Part of a complex composed of FtsB, FtsL and FtsQ.

Its subcellular location is the cell inner membrane. Essential cell division protein. May link together the upstream cell division proteins, which are predominantly cytoplasmic, with the downstream cell division proteins, which are predominantly periplasmic. The chain is Cell division protein FtsB from Escherichia coli O81 (strain ED1a).